The chain runs to 87 residues: Small ribosomal subunit protein bS20 (87 aa).

A compositionally biased stretch (basic residues) spans 1–11; it reads MAHHKSAIKRI. Positions 1–26 are disordered; that stretch reads MAHHKSAIKRIKQNEKRNARNRHQKS.

This sequence belongs to the bacterial ribosomal protein bS20 family.

In terms of biological role, binds directly to 16S ribosomal RNA. In Trichlorobacter lovleyi (strain ATCC BAA-1151 / DSM 17278 / SZ) (Geobacter lovleyi), this protein is Small ribosomal subunit protein bS20.